The following is a 189-amino-acid chain: Cancer/testis antigen family 45 member A10 (189 aa).

Belongs to the CT45 family.

It is found in the nucleus. This Homo sapiens (Human) protein is Cancer/testis antigen family 45 member A10.